The following is a 134-amino-acid chain: Profilin-2 (134 aa).

The cysteines at positions 13 and 118 are disulfide-linked. An Involved in PIP2 interaction motif is present at residues 84–100 (AVIRGKKGSGGITIKKT). Thr114 carries the phosphothreonine modification.

This sequence belongs to the profilin family. In terms of assembly, occurs in many kinds of cells as a complex with monomeric actin in a 1:1 ratio. Post-translationally, phosphorylated by MAP kinases.

The protein localises to the cytoplasm. It localises to the cytoskeleton. Its function is as follows. Binds to actin and affects the structure of the cytoskeleton. At high concentrations, profilin prevents the polymerization of actin, whereas it enhances it at low concentrations. In Olea europaea (Common olive), this protein is Profilin-2.